A 120-amino-acid chain; its full sequence is Immunoglobulin kappa variable 2-29 (120 aa).

The first 20 residues, 1–20 (MRLPAQLLGLLMLWIPGSSA), serve as a signal peptide directing secretion. The tract at residues 21 to 43 (DIVMTQTPLSLSVTPGQPASISC) is framework-1. An Ig-like domain is found at 21–120 (DIVMTQTPLS…YYCMQGIHLP (100 aa)). A disulfide bond links cysteine 43 and cysteine 113. The complementarity-determining-1 stretch occupies residues 44 to 59 (KSSQSLLHSDGKTYLY). The segment at 60–74 (WYLQKPGQSPQLLIY) is framework-2. The segment at 75-81 (EVSSRFS) is complementarity-determining-2. The framework-3 stretch occupies residues 82–113 (GVPDRFSGSGSGTDFTLKISRVEAEDVGVYYC). The interval 114-120 (MQGIHLP) is complementarity-determining-3.

In terms of assembly, immunoglobulins are composed of two identical heavy chains and two identical light chains; disulfide-linked.

It localises to the secreted. It is found in the cell membrane. Functionally, v region of the variable domain of immunoglobulin light chains that participates in the antigen recognition. Immunoglobulins, also known as antibodies, are membrane-bound or secreted glycoproteins produced by B lymphocytes. In the recognition phase of humoral immunity, the membrane-bound immunoglobulins serve as receptors which, upon binding of a specific antigen, trigger the clonal expansion and differentiation of B lymphocytes into immunoglobulins-secreting plasma cells. Secreted immunoglobulins mediate the effector phase of humoral immunity, which results in the elimination of bound antigens. The antigen binding site is formed by the variable domain of one heavy chain, together with that of its associated light chain. Thus, each immunoglobulin has two antigen binding sites with remarkable affinity for a particular antigen. The variable domains are assembled by a process called V-(D)-J rearrangement and can then be subjected to somatic hypermutations which, after exposure to antigen and selection, allow affinity maturation for a particular antigen. This Homo sapiens (Human) protein is Immunoglobulin kappa variable 2-29.